Here is a 109-residue protein sequence, read N- to C-terminus: Ubiquitin-related modifier 1 homolog (109 aa).

Gly-109 carries the 1-thioglycine modification. Gly-109 is covalently cross-linked (Glycyl lysine isopeptide (Gly-Lys) (interchain with K-? in acceptor proteins)).

The protein belongs to the URM1 family. C-terminal thiocarboxylation occurs in 2 steps, it is first acyl-adenylated (-COAMP) via the hesA/moeB/thiF part of the MOCS3 homolog, then thiocarboxylated (-COSH) via the rhodanese domain of the MOCS3 homolog.

Its subcellular location is the cytoplasm. It functions in the pathway tRNA modification; 5-methoxycarbonylmethyl-2-thiouridine-tRNA biosynthesis. Acts as a sulfur carrier required for 2-thiolation of mcm(5)S(2)U at tRNA wobble positions of cytosolic tRNA(Lys), tRNA(Glu) and tRNA(Gln). Serves as sulfur donor in tRNA 2-thiolation reaction by being thiocarboxylated (-COSH) at its C-terminus by MOCS3. The sulfur is then transferred to tRNA to form 2-thiolation of mcm(5)S(2)U. Also acts as a ubiquitin-like protein (UBL) that is covalently conjugated via an isopeptide bond to lysine residues of target proteins. The thiocarboxylated form serves as substrate for conjugation and oxidative stress specifically induces the formation of UBL-protein conjugates. This Anopheles gambiae (African malaria mosquito) protein is Ubiquitin-related modifier 1 homolog.